Here is a 590-residue protein sequence, read N- to C-terminus: Cationic amino acid transporter 8, vacuolar (590 aa).

Residues 1–85 (MIPASMEEAH…ESENPMRRCL (85 aa)) are Cytoplasmic-facing. A helical transmembrane segment spans residues 86-106 (TWWDLLWLSFGSVVGSGVFVI). The Vacuolar portion of the chain corresponds to 107 to 114 (TGQEARVG). A helical transmembrane segment spans residues 115–135 (AGPAVVLSYAISGVSALLSVL). At 136–160 (CYAEFGVEIPVAGGSFSYLRVELGD) the chain is on the cytoplasmic side. A helical transmembrane segment spans residues 161-181 (FIAFIAAGNILLEAMVGAAGL). The Vacuolar portion of the chain corresponds to 182–209 (GRSWSSYLASLVKNDSDYFRIKVDSFAK). A glycan (N-linked (GlcNAc...) asparagine) is linked at N195. The chain crosses the membrane as a helical span at residues 210–230 (GFDLLDPVAVAVLLVANGIAM). Residues 231–238 (TGTKRTSW) lie on the Cytoplasmic side of the membrane. The helical transmembrane segment at 239 to 259 (LNLITSMVTVCIIVFIVVVGF) threads the bilayer. Topologically, residues 260-266 (THSKTSN) are vacuolar. The helical transmembrane segment at 267 to 287 (LVPFFPYGAKGVVQSAAVVYW) threads the bilayer. The Cytoplasmic portion of the chain corresponds to 288–310 (SYTGFDMVANMAEETEKPSRDIP). The chain crosses the membrane as a helical span at residues 311–331 (IGLVGSMSMITVVYCLMALAL). At 332 to 359 (TMMVKYTEIDANAAYSVAFAQIGMKWAK) the chain is on the vacuolar side. Residues 360–380 (YLVGICALKGMTTSLLVGSLG) form a helical membrane-spanning segment. Residues 381 to 407 (QARYTTQIARSHMIPPWFALVHPKTGT) are Cytoplasmic-facing. A helical transmembrane segment spans residues 408–428 (PIYATLLVTILSSIISFFTSL). Position 429 (E429) is a topological domain, vacuolar. Residues 430 to 450 (VLSSVFSFATLFIFMLVAVAL) form a helical membrane-spanning segment. Topologically, residues 451 to 465 (LVRRYYVKDVTPEAG) are cytoplasmic. Residues 466–486 (LLKFLGFLFLIIASSIGVSAL) form a helical membrane-spanning segment. The Vacuolar portion of the chain corresponds to 487–493 (WNSGVKG). Residues 494-514 (WIAYTVTGVIWFIGTLGLALL) traverse the membrane as a helical segment. The Cytoplasmic portion of the chain corresponds to 515–522 (PKYRVPKV). Residues 523-543 (WGVPLVPWLPSFSIAMNLFLI) form a helical membrane-spanning segment. Residues 544–553 (GSLGYVAFLR) lie on the Vacuolar side of the membrane. Residues 554–574 (FIICTMVMLLYYLFVGLHATY) form a helical membrane-spanning segment. Over 575 to 590 (DVAHQPLEEAKFEGER) the chain is Cytoplasmic.

The protein belongs to the amino acid-polyamine-organocation (APC) superfamily. Cationic amino acid transporter (CAT) (TC 2.A.3.3) family. As to expression, expressed in roots, stems, flowers and leaves. Mostly present in young and rapidly dividing tissues such as the shoot and root apical meristem, and in young leaves and petioles during seedling development.

It localises to the cell membrane. Its function is as follows. Permease involved in the transport of the cationic neutral or acidic amino acids. This Arabidopsis thaliana (Mouse-ear cress) protein is Cationic amino acid transporter 8, vacuolar (CAT8).